The chain runs to 225 residues: MTDQQLLWLLQLSDSNFPSGAFSHSFGFETYMYNEQICDAKTFREALVVYIQTQLTYTDGLACRIAYEQLEANSMEGLQRLNETLFALCLAKETREGTRMIGERLWKLCRDIYGVDELDEIVQTTRSIHPAIVFAAVGRKIGAAKQTTVLTYLFASVQTMVQNAVRGIPLGQTDGQKLLVMAQPYLIHAASIIETLDEEELGAAAVGLEIAQMQHERLPVRLFMS.

The protein belongs to the UreF family. In terms of assembly, ureD, UreF and UreG form a complex that acts as a GTP-hydrolysis-dependent molecular chaperone, activating the urease apoprotein by helping to assemble the nickel containing metallocenter of UreC. The UreE protein probably delivers the nickel.

It is found in the cytoplasm. Its function is as follows. Required for maturation of urease via the functional incorporation of the urease nickel metallocenter. The polypeptide is Urease accessory protein UreF (Geobacillus kaustophilus (strain HTA426)).